A 105-amino-acid polypeptide reads, in one-letter code: MSQLFVCTVEELPDGGARKVEYTPDIALFHYDGEFFAVDDRCSHGNASISEGYLEDNATVECPLHTASFCLRTGKALCLPATDPLKTYPVVVKDGNIYITVSEEQ.

A Rieske domain is found at 4-99 (LFVCTVEELP…VVVKDGNIYI (96 aa)). Residues C42, H44, C62, and H65 each coordinate [2Fe-2S] cluster.

The protein belongs to the bacterial ring-hydroxylating dioxygenase ferredoxin component family. In terms of assembly, this dioxygenase system consists of four proteins: the two subunits of the hydroxylase component (HcaE and HcaF), a ferredoxin (HcaC) and a ferredoxin reductase (HcaD). Requires [2Fe-2S] cluster as cofactor.

The protein operates within aromatic compound metabolism; 3-phenylpropanoate degradation. Part of the multicomponent 3-phenylpropionate dioxygenase, that converts 3-phenylpropionic acid (PP) and cinnamic acid (CI) into 3-phenylpropionate-dihydrodiol (PP-dihydrodiol) and cinnamic acid-dihydrodiol (CI-dihydrodiol), respectively. This protein seems to be a 2Fe-2S ferredoxin. The chain is 3-phenylpropionate/cinnamic acid dioxygenase ferredoxin subunit from Photorhabdus laumondii subsp. laumondii (strain DSM 15139 / CIP 105565 / TT01) (Photorhabdus luminescens subsp. laumondii).